The following is a 510-amino-acid chain: MEIRADEISRIIREQIKDYGKKVEVAETGSILSQADGVARIYGLAGAAAGELLEFPGGIRGLVLNLEEDNVGAAIMGPYEHIREGDPVKRTGLIAEVPVGEELLGRVVDGLGNPIDGRGPLNAKHHRKIEIKAPGIVKRKSVHEPMQTGLKAIDALVPIGRGQRELILGDRQTGKTAVAIDTILNNKGNNLYCFYVAIGQKQSTVARVVDTLKKYGAMEYTTVISASASDPAPMQYLAPYTGVTMAEYFRDSGRHALIIYDDLSKQAVAYRQLSLLLRRPPGREAYPGDVFYLHSRLLERAAKLSDKEGAGSLTALPIIETQAGDVSAYIPTNVISITDGQIFLESNLFYQGVRPAINVGISVSRVGGSAQIKAMKQVAGSLKLDLAQYRELAAFAQFGSDLDKATQETLARGERLVELLKQGQYAPLSVEKQVIQIYAGTQKDTDGQNWIRAVPTEQVVRYMRELIEFLDARHPGIAKAIAEKKALDDGIRKDLDAALREFAGIFKIEG.

169-176 (GDRQTGKT) contributes to the ATP binding site.

The protein belongs to the ATPase alpha/beta chains family. In terms of assembly, F-type ATPases have 2 components, CF(1) - the catalytic core - and CF(0) - the membrane proton channel. CF(1) has five subunits: alpha(3), beta(3), gamma(1), delta(1), epsilon(1). CF(0) has three main subunits: a(1), b(2) and c(9-12). The alpha and beta chains form an alternating ring which encloses part of the gamma chain. CF(1) is attached to CF(0) by a central stalk formed by the gamma and epsilon chains, while a peripheral stalk is formed by the delta and b chains.

The protein localises to the cell inner membrane. It catalyses the reaction ATP + H2O + 4 H(+)(in) = ADP + phosphate + 5 H(+)(out). Produces ATP from ADP in the presence of a proton gradient across the membrane. The alpha chain is a regulatory subunit. This is ATP synthase subunit alpha from Anaeromyxobacter dehalogenans (strain 2CP-1 / ATCC BAA-258).